The sequence spans 220 residues: 7-cyano-7-deazaguanine synthase (220 aa).

11-21 is an ATP binding site; it reads VSGGMDSVTLM. Residues C186, C194, C197, and C200 each coordinate Zn(2+).

Belongs to the QueC family. Requires Zn(2+) as cofactor.

It carries out the reaction 7-carboxy-7-deazaguanine + NH4(+) + ATP = 7-cyano-7-deazaguanine + ADP + phosphate + H2O + H(+). Its pathway is purine metabolism; 7-cyano-7-deazaguanine biosynthesis. Functionally, catalyzes the ATP-dependent conversion of 7-carboxy-7-deazaguanine (CDG) to 7-cyano-7-deazaguanine (preQ(0)). The sequence is that of 7-cyano-7-deazaguanine synthase from Porphyromonas gingivalis (strain ATCC BAA-308 / W83).